The chain runs to 196 residues: Putative NADH dehydrogenase/NAD(P)H nitroreductase xcc-b100_0585 (196 aa).

Belongs to the nitroreductase family. HadB/RutE subfamily. FMN serves as cofactor.

The protein is Putative NADH dehydrogenase/NAD(P)H nitroreductase xcc-b100_0585 of Xanthomonas campestris pv. campestris (strain B100).